A 625-amino-acid chain; its full sequence is tRNA uridine 5-carboxymethylaminomethyl modification enzyme MnmG (625 aa).

An FAD-binding site is contributed by 11–16 (GAGHAG). An NAD(+)-binding site is contributed by 271–285 (GPRYCPSIETKIVTF).

This sequence belongs to the MnmG family. Homodimer. Heterotetramer of two MnmE and two MnmG subunits. FAD is required as a cofactor.

It is found in the cytoplasm. Functionally, NAD-binding protein involved in the addition of a carboxymethylaminomethyl (cmnm) group at the wobble position (U34) of certain tRNAs, forming tRNA-cmnm(5)s(2)U34. The polypeptide is tRNA uridine 5-carboxymethylaminomethyl modification enzyme MnmG (Parabacteroides distasonis (strain ATCC 8503 / DSM 20701 / CIP 104284 / JCM 5825 / NCTC 11152)).